The primary structure comprises 104 residues: AVIToxin-VAR1 (104 aa).

Residues 1–19 (MRSLLCAPLLLLLLSAGES) form the signal peptide. Disulfide bonds link cysteine 26–cysteine 38, cysteine 32–cysteine 50, cysteine 37–cysteine 78, cysteine 60–cysteine 86, and cysteine 80–cysteine 96.

It belongs to the AVIT (prokineticin) family. In terms of tissue distribution, expressed by the venom gland.

The protein resides in the secreted. Potent agonist for both PKR1/PROKR1 and PKR2/PROKR2. Potently contracts gastrointestinal (GI) smooth muscle. The sequence is that of AVIToxin-VAR1 from Varanus varius (Lace monitor lizard).